Reading from the N-terminus, the 365-residue chain is tRNA-specific 2-thiouridylase MnmA (365 aa).

ATP is bound by residues 9–16 and Met-35; that span reads AMSGGVDS. The Nucleophile role is filled by Cys-105. An intrachain disulfide couples Cys-105 to Cys-203. Gly-129 contacts ATP. The interval 153 to 155 is interaction with tRNA; the sequence is KDQ. Catalysis depends on Cys-203, which acts as the Cysteine persulfide intermediate. Positions 308–309 are interaction with tRNA; the sequence is RY.

The protein belongs to the MnmA/TRMU family.

The protein resides in the cytoplasm. It carries out the reaction S-sulfanyl-L-cysteinyl-[protein] + uridine(34) in tRNA + AH2 + ATP = 2-thiouridine(34) in tRNA + L-cysteinyl-[protein] + A + AMP + diphosphate + H(+). Catalyzes the 2-thiolation of uridine at the wobble position (U34) of tRNA, leading to the formation of s(2)U34. This is tRNA-specific 2-thiouridylase MnmA from Pelotomaculum thermopropionicum (strain DSM 13744 / JCM 10971 / SI).